The chain runs to 572 residues: Hemagglutinin-neuraminidase (572 aa).

Residues 1–31 lie on the Intravirion side of the membrane; that stretch reads MEYWKHTNHGKDAGNELETSMATHGNKLTNK. The chain crosses the membrane as a helical span at residues 32 to 52; the sequence is IIYILWTIILVLLSIVFIIVL. Residues 53-572 are Virion surface-facing; sequence INSIKSEKAH…FKTEIPKSCS (520 aa). Disulfide bonds link Cys190-Cys214 and Cys256-Cys269. The interval 252-257 is involved in neuraminidase activity; that stretch reads NRKSCS. Residues Asn308 and Asn351 are each glycosylated (N-linked (GlcNAc...) asparagine; by host). Disulfide bonds link Cys355–Cys469 and Cys463–Cys473. Asn523 carries N-linked (GlcNAc...) asparagine; by host glycosylation. Cys535 and Cys544 are oxidised to a cystine.

This sequence belongs to the paramyxoviruses hemagglutinin-neuraminidase family. Homotetramer; composed of disulfide-linked homodimers. Interacts with F protein trimer.

It localises to the virion membrane. It is found in the host cell membrane. The catalysed reaction is Hydrolysis of alpha-(2-&gt;3)-, alpha-(2-&gt;6)-, alpha-(2-&gt;8)- glycosidic linkages of terminal sialic acid residues in oligosaccharides, glycoproteins, glycolipids, colominic acid and synthetic substrates.. Its function is as follows. Attaches the virus to sialic acid-containing cell receptors and thereby initiating infection. Binding of HN protein to the receptor induces a conformational change that allows the F protein to trigger virion/cell membranes fusion. Neuraminidase activity ensures the efficient spread of the virus by dissociating the mature virions from the neuraminic acid containing glycoproteins. The polypeptide is Hemagglutinin-neuraminidase (HN) (Homo sapiens (Human)).